We begin with the raw amino-acid sequence, 440 residues long: Trigger factor (440 aa).

Positions G176–V261 constitute a PPIase FKBP-type domain.

It belongs to the FKBP-type PPIase family. Tig subfamily.

The protein resides in the cytoplasm. It catalyses the reaction [protein]-peptidylproline (omega=180) = [protein]-peptidylproline (omega=0). Its function is as follows. Involved in protein export. Acts as a chaperone by maintaining the newly synthesized protein in an open conformation. Functions as a peptidyl-prolyl cis-trans isomerase. The protein is Trigger factor of Ehrlichia canis (strain Jake).